Consider the following 453-residue polypeptide: MSPQTETKAGVGFKAGVKEYKLTYYTPEYETKDTDILAAFRVTPQPGVPPEERGAAVAAESSTGTWTTVWTDGLTSLDRYKGRCYHIEPVPGEEEQFIAYVAYPLDLFEEGSVTNMFTSIVGNVFGFKALRALRLEDLRIPVAYVKTFQGPPHGIQVERDKLNKYGRPLLGCTIKPKLGLSAKNYGRAVYECLRGGLDFTKDDENVNSQPFMRWRDRFLFCAEAIYKSQAETGEIKGHYLNATAGTCEEMIKRAVFARELGVPIVMHDYLTGGFTANTSLSHYCRDNGLLLHIHRAMHAVIDRQKNHGMHFRVLAKALRMSGGDHVHSGTVVGKLEGERDITLGFVDLLRDDYIEKDRSRGVYFTQDWVSLPGVLPVASRGIHVWHMPALTEIFGDDSVLQFGGGTLGHPWGNAPGAVANRVALEACVKARNEGRDLAVEGGEIIREACKWSP.

Residues 1–2 (MS) constitute a propeptide that is removed on maturation. Proline 3 is modified (N-acetylproline). At lysine 14 the chain carries N6,N6,N6-trimethyllysine. Asparagine 123 and threonine 173 together coordinate substrate. Lysine 175 serves as the catalytic Proton acceptor. Lysine 177 is a binding site for substrate. Positions 201, 203, and 204 each coordinate Mg(2+). The residue at position 201 (lysine 201) is an N6-carboxylysine. Histidine 294 (proton acceptor) is an active-site residue. The substrate site is built by arginine 295, histidine 327, and serine 379.

Belongs to the RuBisCO large chain family. Type I subfamily. As to quaternary structure, heterohexadecamer of 8 large chains and 8 small chains; disulfide-linked. The disulfide link is formed within the large subunit homodimers. Mg(2+) serves as cofactor. The disulfide bond which can form in the large chain dimeric partners within the hexadecamer appears to be associated with oxidative stress and protein turnover.

The protein localises to the plastid. Its subcellular location is the chloroplast. It catalyses the reaction 2 (2R)-3-phosphoglycerate + 2 H(+) = D-ribulose 1,5-bisphosphate + CO2 + H2O. The catalysed reaction is D-ribulose 1,5-bisphosphate + O2 = 2-phosphoglycolate + (2R)-3-phosphoglycerate + 2 H(+). Functionally, ruBisCO catalyzes two reactions: the carboxylation of D-ribulose 1,5-bisphosphate, the primary event in carbon dioxide fixation, as well as the oxidative fragmentation of the pentose substrate in the photorespiration process. Both reactions occur simultaneously and in competition at the same active site. The sequence is that of Ribulose bisphosphate carboxylase large chain from Galium album (White bedstraw).